Consider the following 274-residue polypeptide: NH(3)-dependent NAD(+) synthetase (274 aa).

46 to 53 contacts ATP; it reads GISGGQDS. Asp52 is a Mg(2+) binding site. Arg140 is a deamido-NAD(+) binding site. Thr160 lines the ATP pocket. Glu165 is a Mg(2+) binding site. The deamido-NAD(+) site is built by Lys173 and Asp180. Residues Lys189 and Thr211 each coordinate ATP. 260-261 contributes to the deamido-NAD(+) binding site; sequence HK.

It belongs to the NAD synthetase family. Homodimer.

The catalysed reaction is deamido-NAD(+) + NH4(+) + ATP = AMP + diphosphate + NAD(+) + H(+). The protein operates within cofactor biosynthesis; NAD(+) biosynthesis; NAD(+) from deamido-NAD(+) (ammonia route): step 1/1. In terms of biological role, catalyzes the ATP-dependent amidation of deamido-NAD to form NAD. Uses ammonia as a nitrogen source. This is NH(3)-dependent NAD(+) synthetase from Streptococcus pneumoniae serotype 2 (strain D39 / NCTC 7466).